The sequence spans 72 residues: MAFLKKSLFLVLFLGLVSLSICEKEKRQNGEDEDENEAANHEEGSEEKRGLFDIVKKVVGAIGSLGKRNDVE.

An N-terminal signal peptide occupies residues 1–22 (MAFLKKSLFLVLFLGLVSLSIC). A propeptide spanning residues 23–49 (EKEKRQNGEDEDENEAANHEEGSEEKR) is cleaved from the precursor. The segment at 27 to 47 (RQNGEDEDENEAANHEEGSEE) is disordered. Residues 38–47 (AANHEEGSEE) are compositionally biased toward basic and acidic residues. The residue at position 65 (L65) is a Leucine amide. A propeptide spanning residues 69 to 72 (NDVE) is cleaved from the precursor.

Amidation is essential for antibacterial activity against Gram-positive bacteria. As to expression, expressed by the skin dorsal glands.

Its subcellular location is the secreted. It is found in the target cell membrane. Amphipathic alpha-helical antimicrobial peptide with weak to moderate activity against Gram-positive bacteria, and no activity against Gram-negative bacteria. Probably acts by disturbing membrane functions with its amphipathic structure. Strongly inhibits the formation of NO by neuronal nitric oxide synthase (nNOS) at micromolar concentrations. Acts by a non-competitive mechanism, probably by binding to calcium/calmodulin and as a consequence blocking calmodulin attachment to nNOS. This chain is Aurein-2.3, found in Ranoidea aurea (Green and golden bell frog).